The chain runs to 142 residues: Large ribosomal subunit protein bL27m (142 aa).

The interval 27–48 (TKKSAGSTKNGRTSQPKNLGLK) is disordered. Polar residues predominate over residues 30-43 (SAGSTKNGRTSQPK).

It belongs to the bacterial ribosomal protein bL27 family.

Its subcellular location is the mitochondrion. The polypeptide is Large ribosomal subunit protein bL27m (mrpl27) (Dictyostelium discoideum (Social amoeba)).